The primary structure comprises 132 residues: Small ribosomal subunit protein uS8c (132 aa).

It belongs to the universal ribosomal protein uS8 family. In terms of assembly, part of the 30S ribosomal subunit.

The protein resides in the plastid. It localises to the chloroplast. In terms of biological role, one of the primary rRNA binding proteins, it binds directly to 16S rRNA central domain where it helps coordinate assembly of the platform of the 30S subunit. This chain is Small ribosomal subunit protein uS8c (rps8), found in Anthoceros angustus (Hornwort).